We begin with the raw amino-acid sequence, 202 residues long: Ras-related protein Rab-1A (202 aa).

Residues 15–23 (GDSGVGKSC), 33–40 (YSESFIST), 63–67 (DTAGQ), 121–124 (NKSD), and 151–153 (SAK) contribute to the GTP site. The Effector region signature appears at 37-45 (FISTIGVDF). Residues 180–202 (QTVDKNKVVPGSSAPISPKSGCC) form a disordered region. 2 S-geranylgeranyl cysteine lipidation sites follow: C201 and C202.

Belongs to the small GTPase superfamily. Rab family.

It localises to the cell membrane. The protein is Ras-related protein Rab-1A (rab1A) of Dictyostelium discoideum (Social amoeba).